A 231-amino-acid chain; its full sequence is Ureidoacrylate amidohydrolase RutB (231 aa).

Asp25 (proton acceptor) is an active-site residue. Residue Lys134 is part of the active site. Catalysis depends on Cys167, which acts as the Nucleophile.

This sequence belongs to the isochorismatase family. RutB subfamily.

The enzyme catalyses (Z)-3-ureidoacrylate + H2O + H(+) = (Z)-3-aminoacrylate + NH4(+) + CO2. It carries out the reaction (Z)-3-ureidoacrylate + H2O = (Z)-3-aminoacrylate + carbamate + H(+). It catalyses the reaction (Z)-2-methylureidoacrylate + H2O + H(+) = (Z)-2-methylaminoacrylate + NH4(+) + CO2. In terms of biological role, hydrolyzes ureidoacrylate to form aminoacrylate and carbamate. The carbamate hydrolyzes spontaneously, thereby releasing one of the nitrogen atoms of the pyrimidine ring as ammonia and one of its carbon atoms as CO2. The polypeptide is Ureidoacrylate amidohydrolase RutB (Escherichia coli O9:H4 (strain HS)).